Here is a 1065-residue protein sequence, read N- to C-terminus: MKHWKKMAASLIAISTMVAVVPTTYAMESEDSQPQTTDTATVQTTKAAEPTLLASWDFTGKNGTTNSAIADSTGKYNLTLKDGAKIEQYGDRSNNEALSLRGDGQYAQIDDQLFKDAGDSFTLEFASKTRHDDSGKFFSFIVGKDGSNDANTTDQANANKYLMFYNSKTAIKGVISNNNWGNEQGSKVTVSGNDNSWADYKIVVDGTNLAVFRNNALIIFKANTGIKMSDLGATTAYIGKSFYSVDEYWNGAMDDIKVYRGADLTMPTAVAISGTGVVNNKLTLIEKDSTKLTATVTPDDAVSKNVTWSSSDESVAKVAADGTVTGVKAGTATITATTELGGVKAELPVTVEPMNAQNAAAADLDAAIAALKVPAAENLPLVAKGTKNGSAITWKSSDEKLITSTNEKYENRTTGADDPYRGAGIINRPAYGDGDSKPVTLTATASYNGGEKVTKTIEVTVKEKTRIAPDTGYAAVTFESDSNGGEKAWVASTEKNDFFTFKTRNNGQAVLTNDADTGGLRDMFVLRSHEGDKYYLIATDLKVSSMGWSQNQVNGSRKVEVYESTDMMNWTRTNGDGNGGITINTPNAGMTWAPEAYWDDDLNAYVVFFSSRMFTDDTRTTPVKNDKTGNSSYAQVRYAITRDFVNFTEPQMWQDTGYSRIDSTVRKIGGYYYRFTKNEQGGAAGDYITTGKSIFLERSKVLTAPTTEASPGQDPNTGWQLLEQALLPFEGPETIKLNKDDELNTKDDDGYILLSDNFAYRAFMTTGAELSKTTWDNPMTKRYPDFNNEKKPVKAEPGAQGYITQGANGGLPDKVRHGAFVNVPESVLKVTKSWTAANPTHIEAVDSTTKAVYNAGTRELTATVTSADKGTLAGSVKFSAGDWSKTVKLDAEGKATVTLPASVSGTVAVAYDGYTDGLVNPSDTTVDGIEQGKVDLAELNKQIAAAEALKESDYTADSWAKLAAALKTAKAALAAENQGEVDTAAADLKTAIEALQKAPTNPGEGDGDKGDGNKPTTPTTGDKTNVNKPGSALSNTGTAVLGLGGAVVALAIAGISLTLWRKRRA.

Residues 1 to 26 (MKHWKKMAASLIAISTMVAVVPTTYA) form the signal peptide. The BIG2 domain occupies 277 to 346 (VVNNKLTLIE…TTELGGVKAE (70 aa)). The disordered stretch occupies residues 997–1031 (KAPTNPGEGDGDKGDGNKPTTPTTGDKTNVNKPGS). The span at 1014-1031 (KPTTPTTGDKTNVNKPGS) shows a compositional bias: polar residues. A helical membrane pass occupies residues 1040–1060 (VLGLGGAVVALAIAGISLTLW).

It belongs to the glycosyl hydrolase 43 family.

It is found in the cell membrane. It catalyses the reaction Hydrolysis of terminal non-reducing alpha-L-arabinofuranoside residues in alpha-L-arabinosides.. Functionally, involved in the type II arabinogalactan (AG) side chains degradation. Releases arabinofuranose (Araf) from alpha-1,3-Araf-substituted beta-1,6-galactooligosaccharides. Can use radish root AGP, larch AG and arabinan. Shows weaker activity with gum arabic and arabinoxylan. The protein is Alpha-L-arabinofuranosidase of Bifidobacterium longum subsp. longum (strain ATCC 15707 / DSM 20219 / JCM 1217 / NCTC 11818 / E194b).